The sequence spans 110 residues: Large ribosomal subunit protein uL22 (110 aa).

Belongs to the universal ribosomal protein uL22 family. In terms of assembly, part of the 50S ribosomal subunit.

This protein binds specifically to 23S rRNA; its binding is stimulated by other ribosomal proteins, e.g. L4, L17, and L20. It is important during the early stages of 50S assembly. It makes multiple contacts with different domains of the 23S rRNA in the assembled 50S subunit and ribosome. Its function is as follows. The globular domain of the protein is located near the polypeptide exit tunnel on the outside of the subunit, while an extended beta-hairpin is found that lines the wall of the exit tunnel in the center of the 70S ribosome. The polypeptide is Large ribosomal subunit protein uL22 (Paracidovorax citrulli (strain AAC00-1) (Acidovorax citrulli)).